We begin with the raw amino-acid sequence, 658 residues long: Translation factor GUF1, mitochondrial (658 aa).

Residues 1–40 (MRGCLQTVRWLTSAWQRPPSYPPLSRAAPCRFFNVSIPRN) constitute a mitochondrion transit peptide. The 181-residue stretch at 60–240 (DRFRNFCIVA…TVVEQIPAPV (181 aa)) folds into the tr-type G domain. GTP contacts are provided by residues 69–76 (AHVDHGKS), 133–137 (DTPGH), and 187–190 (NKVD).

The protein belongs to the TRAFAC class translation factor GTPase superfamily. Classic translation factor GTPase family. LepA subfamily.

The protein localises to the mitochondrion inner membrane. It carries out the reaction GTP + H2O = GDP + phosphate + H(+). Promotes mitochondrial protein synthesis. May act as a fidelity factor of the translation reaction, by catalyzing a one-codon backward translocation of tRNAs on improperly translocated ribosomes. Binds to mitochondrial ribosomes in a GTP-dependent manner. This Paracoccidioides brasiliensis (strain Pb18) protein is Translation factor GUF1, mitochondrial.